Here is a 483-residue protein sequence, read N- to C-terminus: tRNA (guanine(37)-N(1))-methyltransferase (483 aa).

The interval 1-24 is disordered; sequence MEEAATLQSLSISSSSPFPNNSSP. The span at 9–24 shows a compositional bias: low complexity; it reads SLSISSSSPFPNNSSP. S-adenosyl-L-methionine-binding positions include His252, 290-291, and Asn379; that span reads DL.

It belongs to the class I-like SAM-binding methyltransferase superfamily. TRM5/TYW2 family. In terms of assembly, monomer.

The protein resides in the mitochondrion matrix. Its subcellular location is the nucleus. The protein localises to the cytoplasm. It carries out the reaction guanosine(37) in tRNA + S-adenosyl-L-methionine = N(1)-methylguanosine(37) in tRNA + S-adenosyl-L-homocysteine + H(+). Specifically methylates the N1 position of guanosine-37 in various cytoplasmic and mitochondrial tRNAs. Methylation is not dependent on the nature of the nucleoside 5' of the target nucleoside. This is the first step in the biosynthesis of wybutosine (yW), a modified base adjacent to the anticodon of tRNAs and required for accurate decoding. In Ajellomyces capsulatus (strain G186AR / H82 / ATCC MYA-2454 / RMSCC 2432) (Darling's disease fungus), this protein is tRNA (guanine(37)-N(1))-methyltransferase.